Consider the following 142-residue polypeptide: Large ribosomal subunit protein uL13 (142 aa).

The protein belongs to the universal ribosomal protein uL13 family. Part of the 50S ribosomal subunit.

This protein is one of the early assembly proteins of the 50S ribosomal subunit, although it is not seen to bind rRNA by itself. It is important during the early stages of 50S assembly. This Desulfotalea psychrophila (strain LSv54 / DSM 12343) protein is Large ribosomal subunit protein uL13.